The chain runs to 692 residues: MRYENLLVEIGTEELPPKALGKLAQAFADNLQGALDTAELKYTSIKWFASPRRLAVNVIGLAEQQEDKLIEKKGPAVSVAFDESGQATKAAQGWARSNGITVEQAERLTTDKGEWLLFKGEAKGEQVSSLLPAMIDGALKKLPIPKAMRWGSSSIQFIRPVHTVTMLFGADVIEGNILGIDSDRVINGHRFHGEKQFSLSHADDYLAQLEAHYVLADFSARKDKIRHQVNAAAQKEDAVADMNEDLLDEVTALVEWPVALTASFDDSFLEVPKEALIYTMKDDQKYFPLIDQNGQLKSRFVFVTNIESKDPMQIISGNEKVIRPRLADAEFFFNTDKKTTLESRLESLKTVLFQKQLGTLYEKSQRISELAGTIANMLSSDISQASRAGLLSKTDLMTNMVMEFPDVQGVMGMHYAKHDGEHDKVALALNEQYMPRFAGDQLPTSNISCAVAIADKIDTLVGIFGIGQVPKGDKDPFALRRAAIGVLRISVEMKLPLDLTTLVQASINSFGTKLTHVEDLESQVIDFILGRFRAWYQDQHIDIDVIQAVAARRPTKPADFAARIEAVSAFKSLASGLALASANKRVANILAKNKVTDTNSINSSLFESEHEAALADAMSDIEETVNAFVVDANYQGVFTELATLHDKVDAFFDNVMVMAEDENVRNNRLALLSKLRTLFLLVADISILNQQQ.

The protein belongs to the class-II aminoacyl-tRNA synthetase family. As to quaternary structure, tetramer of two alpha and two beta subunits.

Its subcellular location is the cytoplasm. It catalyses the reaction tRNA(Gly) + glycine + ATP = glycyl-tRNA(Gly) + AMP + diphosphate. This is Glycine--tRNA ligase beta subunit from Pseudoalteromonas atlantica (strain T6c / ATCC BAA-1087).